A 134-amino-acid polypeptide reads, in one-letter code: Protein OPG030 (134 aa).

The BACK domain maps to 88–133 (YKENGLRNSFLRQYINNNIEEIRNTDQFLKFDVDSVCDILNNDETI).

This sequence belongs to the orthopoxvirus OPG030 family.

This is Protein OPG030 (OPG30) from Variola virus (isolate Human/India/Ind3/1967) (VARV).